Consider the following 430-residue polypeptide: Enolase (430 aa).

Position 168 (glutamine 168) interacts with (2R)-2-phosphoglycerate. Glutamate 210 acts as the Proton donor in catalysis. Residues aspartate 247, glutamate 288, and aspartate 315 each coordinate Mg(2+). Residues lysine 340, arginine 369, serine 370, and lysine 391 each contribute to the (2R)-2-phosphoglycerate site. Residue lysine 340 is the Proton acceptor of the active site.

The protein belongs to the enolase family. Requires Mg(2+) as cofactor.

It is found in the cytoplasm. Its subcellular location is the secreted. The protein localises to the cell surface. It carries out the reaction (2R)-2-phosphoglycerate = phosphoenolpyruvate + H2O. Its pathway is carbohydrate degradation; glycolysis; pyruvate from D-glyceraldehyde 3-phosphate: step 4/5. In terms of biological role, catalyzes the reversible conversion of 2-phosphoglycerate (2-PG) into phosphoenolpyruvate (PEP). It is essential for the degradation of carbohydrates via glycolysis. This chain is Enolase, found in Picosynechococcus sp. (strain ATCC 27264 / PCC 7002 / PR-6) (Agmenellum quadruplicatum).